Consider the following 1320-residue polypeptide: Phosphoribosylformylglycinamidine synthase (1320 aa).

Residues 310-321 and Ala-686 contribute to the ATP site; that span reads GAATGSGGEIRD. Mg(2+)-binding residues include Asp-687, Glu-726, Asn-730, and Asp-894. An ATP-binding site is contributed by Ser-896. A Glutamine amidotransferase type-1 domain is found at 1067-1320; sequence VAILREQGVN…MFRNARAFIG (254 aa). The active-site Nucleophile is Cys-1160. Active-site residues include His-1285 and Glu-1287.

In the N-terminal section; belongs to the FGAMS family. As to quaternary structure, monomer.

It localises to the cytoplasm. It catalyses the reaction N(2)-formyl-N(1)-(5-phospho-beta-D-ribosyl)glycinamide + L-glutamine + ATP + H2O = 2-formamido-N(1)-(5-O-phospho-beta-D-ribosyl)acetamidine + L-glutamate + ADP + phosphate + H(+). Its pathway is purine metabolism; IMP biosynthesis via de novo pathway; 5-amino-1-(5-phospho-D-ribosyl)imidazole from N(2)-formyl-N(1)-(5-phospho-D-ribosyl)glycinamide: step 1/2. Its function is as follows. Phosphoribosylformylglycinamidine synthase involved in the purines biosynthetic pathway. Catalyzes the ATP-dependent conversion of formylglycinamide ribonucleotide (FGAR) and glutamine to yield formylglycinamidine ribonucleotide (FGAM) and glutamate. This Colwellia psychrerythraea (strain 34H / ATCC BAA-681) (Vibrio psychroerythus) protein is Phosphoribosylformylglycinamidine synthase.